A 393-amino-acid polypeptide reads, in one-letter code: Lipid-A-disaccharide synthase (393 aa).

The protein belongs to the LpxB family.

It carries out the reaction a lipid X + a UDP-2-N,3-O-bis[(3R)-3-hydroxyacyl]-alpha-D-glucosamine = a lipid A disaccharide + UDP + H(+). The protein operates within bacterial outer membrane biogenesis; LPS lipid A biosynthesis. Functionally, condensation of UDP-2,3-diacylglucosamine and 2,3-diacylglucosamine-1-phosphate to form lipid A disaccharide, a precursor of lipid A, a phosphorylated glycolipid that anchors the lipopolysaccharide to the outer membrane of the cell. This chain is Lipid-A-disaccharide synthase, found in Rhodopseudomonas palustris (strain ATCC BAA-98 / CGA009).